We begin with the raw amino-acid sequence, 32 residues long: GMWSKIKNAGKAAKAAAKAAGKAALGAVSEAM.

As to expression, expressed by the skin glands.

The protein resides in the secreted. It is found in the target cell membrane. Functionally, antimicrobial peptide with activity against Gram-negative bacteria, but not against Gram-positive bacteria. Active against E.coli (MIC=5 uM), and P.aeruginosa (MIC=40 uM). Acts by disrupting cell membranes. Is able to depolarize membranes of Gram-positive and Gram-negative bacteria. Also acts as a potent chemoattractant for human leukocytes and activates them mainly through a GPCR, possibly FPRL1 coupled to the ERK1/2 MAPK pathway. Is unstructured in water but become helical upon binding to anionic lipids. In contrast to most dermaseptins, is not structured in the presence of zwitterionic lipids. Does not show hemolytic activity. The protein is Dermaseptin-DA4 of Agalychnis dacnicolor (Giant Mexican leaf frog).